We begin with the raw amino-acid sequence, 387 residues long: Polyphosphate kinase (387 aa).

Residues Arg-347 and Arg-377 each coordinate Mg(2+).

Belongs to the polyphosphate kinase 1 (PPK1) family. Requires Mg(2+) as cofactor. Post-translationally, an intermediate of this reaction is the autophosphorylated ppk in which a phosphate is covalently linked to a histidine residue through a N-P bond.

The enzyme catalyses [phosphate](n) + ATP = [phosphate](n+1) + ADP. In terms of biological role, catalyzes the reversible transfer of the terminal phosphate of ATP to form a long-chain polyphosphate (polyP). This Aphanizomenon baltica protein is Polyphosphate kinase (ppk).